The primary structure comprises 217 residues: MFNFWGSKDQQQGQSRPQEASSQSPWYSPSLVSSPSSSRPQSSGQISAQVSPGEAAGIIVFLKDKSVDELRKLLSDKDAYQQFLLSLDQVKVQNNIKDELRRETLQLARDNLEKEPQIMELRNQCRIIRTTELATAQEKLNELERQKEEILKFYSPGSLLHKLQEAMNQVDEESEALQEKFLEKEIDTAAFVQKYKKLRTTYHRRALIHLAAKTSNI.

A disordered region spans residues 1–49; that stretch reads MFNFWGSKDQQQGQSRPQEASSQSPWYSPSLVSSPSSSRPQSSGQISAQ. Polar residues predominate over residues 8–20; it reads KDQQQGQSRPQEA. Over residues 21 to 47 the composition is skewed to low complexity; that stretch reads SSQSPWYSPSLVSSPSSSRPQSSGQIS. In terms of domain architecture, VPS37 C-terminal spans 137–217; sequence QEKLNELERQ…IHLAAKTSNI (81 aa).

This sequence belongs to the VPS37 family. In terms of assembly, component of the endosomal sorting required for transport complex I (ESCRT-I), composed of ELC, VPS28 and VPS37. Interacts with ELC.

The protein localises to the endosome. Functionally, component of the ESCRT-I complex (endosomal sorting complex required for transport I), a regulator of vesicular trafficking process. Required for the sorting of endocytic ubiquitinated cargos into multivesicular bodies (MVBs). The polypeptide is Vacuolar protein-sorting-associated protein 37 homolog 1 (VPS37-1) (Arabidopsis thaliana (Mouse-ear cress)).